The primary structure comprises 306 residues: Tyrosine recombinase XerC (306 aa).

The Core-binding (CB) domain maps to 6–92 (NTLYLQTKPY…ALRQWFSYLI (87 aa)). The 180-residue stretch at 113 to 292 (RLPKNIDAEQ…DFQHLAKIYD (180 aa)) folds into the Tyr recombinase domain. Active-site residues include R152, K176, H244, R247, and H270. Residue Y279 is the O-(3'-phospho-DNA)-tyrosine intermediate of the active site.

Belongs to the 'phage' integrase family. XerC subfamily. Forms a cyclic heterotetrameric complex composed of two molecules of XerC and two molecules of XerD.

It localises to the cytoplasm. Functionally, site-specific tyrosine recombinase, which acts by catalyzing the cutting and rejoining of the recombining DNA molecules. The XerC-XerD complex is essential to convert dimers of the bacterial chromosome into monomers to permit their segregation at cell division. It also contributes to the segregational stability of plasmids. The sequence is that of Tyrosine recombinase XerC from Actinobacillus pleuropneumoniae serotype 7 (strain AP76).